The sequence spans 499 residues: Maturase K (499 aa).

This sequence belongs to the intron maturase 2 family. MatK subfamily.

The protein resides in the plastid. Its subcellular location is the chloroplast. Its function is as follows. Usually encoded in the trnK tRNA gene intron. Probably assists in splicing its own and other chloroplast group II introns. The chain is Maturase K from Gleditsia triacanthos (Common honey-locust).